The primary structure comprises 308 residues: Nuclear transcription factor Y subunit A-5 (308 aa).

Residues 1–10 (MQVFQRKEDS) are compositionally biased toward basic and acidic residues. 2 disordered regions span residues 1–26 (MQVF…IQGS) and 49–71 (GLQL…GGGE). The span at 11–26 (SWGNSMPTTNSNIQGS) shows a compositional bias: polar residues. The Subunit association domain (SAD) signature appears at 181–204 (FVNAKQYHAILRRRKHRAKLEAQN). A DNA-binding region (NFYA/HAP2-type) is located at residues 211–236 (KPYLHESRHLHALKRARGSGGRFLNT). The interval 251 to 273 (MANGQNFSMSPHGGGSGIGSSSI) is disordered.

The protein belongs to the NFYA/HAP2 subunit family. Heterotrimeric transcription factor composed of three components, NF-YA, NF-YB and NF-YC. NF-YB and NF-YC must interact and dimerize for NF-YA association and DNA binding. Expressed in the whole plant, except roots. Present in etiolated seedlings.

It localises to the nucleus. Stimulates the transcription of various genes by recognizing and binding to a CCAAT motif in promoters. Involved in the blue light (BL) and abscisic acid (ABA) signaling pathways. The chain is Nuclear transcription factor Y subunit A-5 (NFYA5) from Arabidopsis thaliana (Mouse-ear cress).